The sequence spans 334 residues: Anthranilate phosphoribosyltransferase (334 aa).

5-phospho-alpha-D-ribose 1-diphosphate-binding positions include G79, 82 to 83 (GD), S87, 89 to 92 (NIST), 107 to 115 (KHGNRSISS), and S119. G79 is a binding site for anthranilate. S91 is a Mg(2+) binding site. N110 contacts anthranilate. R165 contributes to the anthranilate binding site. 2 residues coordinate Mg(2+): D224 and E225.

This sequence belongs to the anthranilate phosphoribosyltransferase family. As to quaternary structure, homodimer. Mg(2+) is required as a cofactor.

It catalyses the reaction N-(5-phospho-beta-D-ribosyl)anthranilate + diphosphate = 5-phospho-alpha-D-ribose 1-diphosphate + anthranilate. It functions in the pathway amino-acid biosynthesis; L-tryptophan biosynthesis; L-tryptophan from chorismate: step 2/5. Its function is as follows. Catalyzes the transfer of the phosphoribosyl group of 5-phosphorylribose-1-pyrophosphate (PRPP) to anthranilate to yield N-(5'-phosphoribosyl)-anthranilate (PRA). In Streptococcus sanguinis (strain SK36), this protein is Anthranilate phosphoribosyltransferase.